A 376-amino-acid polypeptide reads, in one-letter code: Transcription factor Sp6 (376 aa).

Residues Met1 to Pro70 form a disordered region. Positions Gly118–Gly126 match the 9aaTAD motif. The tract at residues His167–Ser223 is disordered. Positions Leu173–Pro186 are enriched in low complexity. C2H2-type zinc fingers lie at residues His254–His278, Phe284–His308, and Phe314–His336. The span at Met333 to Ala343 shows a compositional bias: basic and acidic residues. Positions Met333–Asn376 are disordered.

Belongs to the Sp1 C2H2-type zinc-finger protein family. Ubiquitous.

The protein resides in the nucleus. Promotes cell proliferation. Plays a role in tooth germ growth. Plays a role in the control of enamel mineralization. Binds the AMBN promoter. The sequence is that of Transcription factor Sp6 (SP6) from Homo sapiens (Human).